Consider the following 198-residue polypeptide: Small ribosomal subunit protein uS2 (198 aa).

This sequence belongs to the universal ribosomal protein uS2 family.

The chain is Small ribosomal subunit protein uS2 from Methanobrevibacter smithii (strain ATCC 35061 / DSM 861 / OCM 144 / PS).